Consider the following 371-residue polypeptide: Glycosyltransferase 8 domain-containing protein 1 (371 aa).

At 1 to 7 (MSFRKVN) the chain is on the cytoplasmic side. The chain crosses the membrane as a helical; Signal-anchor for type II membrane protein span at residues 8–28 (IIILVLAVALFLLVLHHNFLS). Over 29 to 371 (LSSLLRNEVT…RRYTEISNIK (343 aa)) the chain is Lumenal. Residues Asn-249 and Asn-257 are each glycosylated (N-linked (GlcNAc...) asparagine).

The protein belongs to the glycosyltransferase 8 family.

The protein localises to the membrane. The chain is Glycosyltransferase 8 domain-containing protein 1 (GLT8D1) from Homo sapiens (Human).